A 226-amino-acid chain; its full sequence is Thaumatin-like protein (226 aa).

A signal peptide spans 1 to 24 (MNFSKNLPLLVSLWAITFFAYTHA). Intrachain disulfides connect C33/C225, C74/C84, C89/C95, C140/C214, C145/C197, C153/C163, C167/C176, and C177/C184.

This sequence belongs to the thaumatin family. In terms of tissue distribution, expressed in fruits.

Its subcellular location is the secreted. Functionally, 3D-structure modeling suggests it may have endo-(1,3)-beta-glucanase activity. The sequence is that of Thaumatin-like protein from Olea europaea (Common olive).